The primary structure comprises 257 residues: Cytochrome c oxidase subunit 3 (257 aa).

A run of 6 helical transmembrane segments spans residues 15–35, 82–102, 124–144, 156–176, 194–214, and 235–255; these read PWPL…VKWF, GMIL…WGFF, FLSA…VTWA, CLQG…LQGL, FFLA…FLMI, and AWYW…IYWW.

This sequence belongs to the cytochrome c oxidase subunit 3 family. As to quaternary structure, component of the cytochrome c oxidase (complex IV, CIV), a multisubunit enzyme composed of a catalytic core of 3 subunits and several supernumerary subunits. The complex exists as a monomer or a dimer and forms supercomplexes (SCs) in the inner mitochondrial membrane with ubiquinol-cytochrome c oxidoreductase (cytochrome b-c1 complex, complex III, CIII).

It localises to the mitochondrion inner membrane. The enzyme catalyses 4 Fe(II)-[cytochrome c] + O2 + 8 H(+)(in) = 4 Fe(III)-[cytochrome c] + 2 H2O + 4 H(+)(out). Component of the cytochrome c oxidase, the last enzyme in the mitochondrial electron transport chain which drives oxidative phosphorylation. The respiratory chain contains 3 multisubunit complexes succinate dehydrogenase (complex II, CII), ubiquinol-cytochrome c oxidoreductase (cytochrome b-c1 complex, complex III, CIII) and cytochrome c oxidase (complex IV, CIV), that cooperate to transfer electrons derived from NADH and succinate to molecular oxygen, creating an electrochemical gradient over the inner membrane that drives transmembrane transport and the ATP synthase. Cytochrome c oxidase is the component of the respiratory chain that catalyzes the reduction of oxygen to water. Electrons originating from reduced cytochrome c in the intermembrane space (IMS) are transferred via the dinuclear copper A center (CU(A)) of subunit 2 and heme A of subunit 1 to the active site in subunit 1, a binuclear center (BNC) formed by heme A3 and copper B (CU(B)). The BNC reduces molecular oxygen to 2 water molecules using 4 electrons from cytochrome c in the IMS and 4 protons from the mitochondrial matrix. The polypeptide is Cytochrome c oxidase subunit 3 (COIII) (Artemia franciscana (Brine shrimp)).